The primary structure comprises 366 residues: tRNA-specific 2-thiouridylase MnmA (366 aa).

ATP is bound by residues 6 to 13 (GLSGGVDS) and Met32. The active-site Nucleophile is the Cys96. Cys96 and Cys196 are disulfide-bonded. Residue Gly120 coordinates ATP. Positions 146 to 148 (KDQ) are interaction with tRNA. Cys196 functions as the Cysteine persulfide intermediate in the catalytic mechanism. The tract at residues 302-303 (RY) is interaction with tRNA.

It belongs to the MnmA/TRMU family.

The protein resides in the cytoplasm. The enzyme catalyses S-sulfanyl-L-cysteinyl-[protein] + uridine(34) in tRNA + AH2 + ATP = 2-thiouridine(34) in tRNA + L-cysteinyl-[protein] + A + AMP + diphosphate + H(+). Its function is as follows. Catalyzes the 2-thiolation of uridine at the wobble position (U34) of tRNA, leading to the formation of s(2)U34. This is tRNA-specific 2-thiouridylase MnmA from Treponema denticola (strain ATCC 35405 / DSM 14222 / CIP 103919 / JCM 8153 / KCTC 15104).